The following is a 166-amino-acid chain: Nucleotide-binding protein Dred_1927 (166 aa).

The protein belongs to the YajQ family.

Its function is as follows. Nucleotide-binding protein. The sequence is that of Nucleotide-binding protein Dred_1927 from Desulforamulus reducens (strain ATCC BAA-1160 / DSM 100696 / MI-1) (Desulfotomaculum reducens).